The chain runs to 387 residues: Deoxyguanosinetriphosphate triphosphohydrolase-like protein (387 aa).

Residues 78 to 209 enclose the HD domain; that stretch reads RLTHSLEVAQ…ANLADEVAYN (132 aa).

It belongs to the dGTPase family. Type 2 subfamily.

This Ralstonia nicotianae (strain ATCC BAA-1114 / GMI1000) (Ralstonia solanacearum) protein is Deoxyguanosinetriphosphate triphosphohydrolase-like protein.